A 329-amino-acid chain; its full sequence is Porphobilinogen deaminase (329 aa).

Residue Cys-253 is modified to S-(dipyrrolylmethanemethyl)cysteine.

This sequence belongs to the HMBS family. Monomer. Requires dipyrromethane as cofactor.

It carries out the reaction 4 porphobilinogen + H2O = hydroxymethylbilane + 4 NH4(+). Tetrapolymerization of the monopyrrole PBG into the hydroxymethylbilane pre-uroporphyrinogen in several discrete steps. The sequence is that of Porphobilinogen deaminase from Leifsonia xyli subsp. xyli (strain CTCB07).